Here is a 487-residue protein sequence, read N- to C-terminus: Protein DETOXIFICATION 10 (487 aa).

Helical transmembrane passes span 35-55, 73-93, 122-142, 155-175, 184-204, 211-231, 264-284, 293-313, 333-353, 377-397, 412-432, and 435-455; these read LICF…IQII, FAVS…SCAL, LVCL…VILG, AAWL…IRYF, LLVT…LLVY, IGGA…LGSF, AAML…SGLL, VLSI…AIAA, IVVY…SMSL, MAPL…LSGV, FGAF…WVHL, and VGLW…LALV.

It belongs to the multi antimicrobial extrusion (MATE) (TC 2.A.66.1) family.

Its subcellular location is the membrane. The polypeptide is Protein DETOXIFICATION 10 (Arabidopsis thaliana (Mouse-ear cress)).